The following is a 287-amino-acid chain: Rhodopsin (287 aa).

The Extracellular segment spans residues 1-5 (VNGAA). The chain crosses the membrane as a helical span at residues 6-30 (YAGLCAYMFLLILVGFPVNFLTLYV). The Cytoplasmic segment spans residues 31 to 42 (TLEHKKLRTPLN). Residues 43–65 (YILLNLAVADLFMVLGGFTTTMY) traverse the membrane as a helical segment. Residues 66–79 (TSAHGYFVLGRLGC) are Extracellular-facing. A disulfide bridge links Cys79 with Cys156. A helical transmembrane segment spans residues 80–102 (NVEGFFATLGGEIALWSLVVLAV). The 'Ionic lock' involved in activated form stabilization motif lies at 103–105 (ERW). The Cytoplasmic segment spans residues 103-121 (ERWIVVCKPISNFRFTEEH). The chain crosses the membrane as a helical span at residues 122 to 142 (AIMGLGFNWVMASACAVPPLV). Topologically, residues 143–171 (GWSRYIPEGMQCSCGINYYTRSEGFNNES) are extracellular. Asn169 carries N-linked (GlcNAc...) asparagine glycosylation. The helical transmembrane segment at 172–193 (LVMKMLICHFLIPLFVIFFCYG) threads the bilayer. At 194–221 (RMLCAVKEAAAAQQESETTQRAEREVSR) the chain is on the cytoplasmic side. The chain crosses the membrane as a helical span at residues 222 to 243 (MVVIMVISFLVCWLPYASVAWY). Topologically, residues 244–255 (IFCNQGSEFGPV) are extracellular. Residues 256 to 277 (FMTLPAFFAKSASIYNPLIYIC) traverse the membrane as a helical segment. Lys265 carries the post-translational modification N6-(retinylidene)lysine. The Cytoplasmic segment spans residues 278–287 (MNKHSRHCMI).

The protein belongs to the G-protein coupled receptor 1 family. Opsin subfamily. Phosphorylated on some or all of the serine and threonine residues present in the C-terminal region. Post-translationally, contains one covalently linked retinal chromophore.

It localises to the membrane. Its subcellular location is the cell projection. The protein localises to the cilium. The protein resides in the photoreceptor outer segment. Photoreceptor required for image-forming vision at low light intensity. While most salt water fish species use retinal as chromophore, most freshwater fish use 3-dehydroretinal, or a mixture of retinal and 3-dehydroretinal. Light-induced isomerization of 11-cis to all-trans retinal triggers a conformational change that activates signaling via G-proteins. Subsequent receptor phosphorylation mediates displacement of the bound G-protein alpha subunit by arrestin and terminates signaling. The polypeptide is Rhodopsin (rho) (Taurulus bubalis (Long-spined sea scorpion)).